A 458-amino-acid polypeptide reads, in one-letter code: Plant UBX domain-containing protein 2 (458 aa).

The interval 1–103 (MDDVKDKLKG…APQDGFDPYG (103 aa)) is disordered. Residues 44-54 (PIQNRFNSSQA) show a composition bias toward polar residues. Over residues 56 to 70 (NPTPRPKPNPNPLPE) the composition is skewed to pro residues. The span at 74–85 (SSSDQKISGSTR) shows a compositional bias: polar residues. The C2H2-type; atypical zinc-finger motif lies at 121-143 (FECPICKNPFTSEEEVSVHVESC). Residues 181 to 248 (SSIDVLLRLF…EIWAVMDVPS (68 aa)) form the PUB domain. Residues 349–433 (KRYKRSMIRV…ELVPSALIRF (85 aa)) enclose the UBX domain.

As to quaternary structure, interacts with CDC48A in vitro and co-fractionates with membrane-associated but not soluble CDC48A in vivo.

The protein resides in the membrane. In terms of biological role, facilitates the interaction of SYP31 and CDC48A, thereby regulating an CDC48A membrane-associated function. Appears to act as a negative regulator mediating the powdery mildew-plant interaction. The chain is Plant UBX domain-containing protein 2 from Arabidopsis thaliana (Mouse-ear cress).